Consider the following 476-residue polypeptide: Viral inhibitor of caspase-8-induced apoptosis (476 aa).

The protein belongs to the herpesviridae US22 family. In terms of assembly, interacts with host pro-caspase-8/CASP8; this interaction inhibits CASP8 activation.

Functionally, plays a role in the inhibition of apoptosis by interacting with the pro-domain of pro-caspase-8/CASP8 and thus preventing its activation. The sequence is that of Viral inhibitor of caspase-8-induced apoptosis (UL36) from Human cytomegalovirus (strain Merlin) (HHV-5).